A 159-amino-acid polypeptide reads, in one-letter code: ATP synthase subunit b 2 (159 aa).

The chain crosses the membrane as a helical span at residues 1 to 21; sequence MDATFWAFIALVIFVAIVVYM.

Belongs to the ATPase B chain family. As to quaternary structure, F-type ATPases have 2 components, F(1) - the catalytic core - and F(0) - the membrane proton channel. F(1) has five subunits: alpha(3), beta(3), gamma(1), delta(1), epsilon(1). F(0) has three main subunits: a(1), b(2) and c(10-14). The alpha and beta chains form an alternating ring which encloses part of the gamma chain. F(1) is attached to F(0) by a central stalk formed by the gamma and epsilon chains, while a peripheral stalk is formed by the delta and b chains.

The protein resides in the cell inner membrane. Functionally, f(1)F(0) ATP synthase produces ATP from ADP in the presence of a proton or sodium gradient. F-type ATPases consist of two structural domains, F(1) containing the extramembraneous catalytic core and F(0) containing the membrane proton channel, linked together by a central stalk and a peripheral stalk. During catalysis, ATP synthesis in the catalytic domain of F(1) is coupled via a rotary mechanism of the central stalk subunits to proton translocation. Component of the F(0) channel, it forms part of the peripheral stalk, linking F(1) to F(0). The chain is ATP synthase subunit b 2 from Brucella abortus (strain S19).